We begin with the raw amino-acid sequence, 282 residues long: Casein kinase II subunit beta-2 (282 aa).

The disordered stretch occupies residues 1-92 (MYRERGMVGS…ESEVSGSDGE (92 aa)). Basic and acidic residues predominate over residues 13-28 (EVVDRKRINEIHDNRP). Polar residues-rich tracts occupy residues 29–47 (SHSM…STSV) and 61–71 (RSGSISKTNIS). Residues 75–92 (DISDTDSEESEVSGSDGE) show a composition bias toward acidic residues.

This sequence belongs to the casein kinase 2 subunit beta family. In terms of assembly, heterotetramer of two catalytic alpha subunits and two regulatory beta subunits. Interacts with CCA1. Phosphorylated by alpha subunit.

It is found in the cytoplasm. It localises to the cytosol. The protein resides in the nucleus. Functionally, plays a complex role in regulating the basal catalytic activity of the alpha subunit. The tetrameric holoenzyme CK2, composed of two alpha and two beta subunits, phosphorylates the transcription factor PIF1 after an exposure to light, resulting in a proteasome-dependent degradation of PIF1 and promotion of photomorphogenesis. CK2 phosphorylates translation initiation factors. May participate in the regulation of the initiation of translation. This Arabidopsis thaliana (Mouse-ear cress) protein is Casein kinase II subunit beta-2 (CKB2).